A 347-amino-acid chain; its full sequence is Purine-rich element-binding protein gamma (347 aa).

2 disordered regions span residues 1 to 34 and 133 to 169; these read MERA…YPQA and GHRQ…HPHS. Positions 9–24 are enriched in gly residues; the sequence is GGGGRGRGGKNVGGSG. The DNA-binding element occupies 51 to 293; it reads AGGAAEIQEL…GIFLKVSEVR (243 aa). Basic and acidic residues predominate over residues 134 to 146; sequence HRQEHGHSKEQGS. Ser160, Ser163, and Ser339 each carry phosphoserine.

This sequence belongs to the PUR DNA-binding protein family. In terms of tissue distribution, isoform 1 is expressed in testis and glioblastoma. Isoform 2 is expressed in fetal lung.

The protein localises to the nucleus. The protein is Purine-rich element-binding protein gamma (PURG) of Homo sapiens (Human).